Reading from the N-terminus, the 122-residue chain is Large ribosomal subunit protein bL19 (122 aa).

The protein belongs to the bacterial ribosomal protein bL19 family.

Its function is as follows. This protein is located at the 30S-50S ribosomal subunit interface and may play a role in the structure and function of the aminoacyl-tRNA binding site. In Novosphingobium aromaticivorans (strain ATCC 700278 / DSM 12444 / CCUG 56034 / CIP 105152 / NBRC 16084 / F199), this protein is Large ribosomal subunit protein bL19.